Here is a 142-residue protein sequence, read N- to C-terminus: Hemoglobin subunit alpha (142 aa).

At S1 the chain carries N-acetylserine. A Globin domain is found at 1–142; it reads SLSDKDKAAV…VALALAERYR (142 aa). H59 is an O2 binding site. Heme b is bound at residue H88.

Belongs to the globin family. In terms of assembly, hb1 is a heterotetramer of two alpha chains and two beta-1 chains, while Hb2 is a heterotetramer of two alpha chains and two beta-2 chains. Red blood cells.

In terms of biological role, involved in oxygen transport from gills to the various peripheral tissues. The protein is Hemoglobin subunit alpha (hba) of Cygnodraco mawsoni (Antarctic dragonfish).